Here is a 1203-residue protein sequence, read N- to C-terminus: Metabotropic glutamate receptor 5 (1203 aa).

A signal peptide spans Met1–Ala20. Residues Gln21–Pro579 lie on the Extracellular side of the membrane. Cys57 and Cys99 are oxidised to a cystine. Tyr64 is an L-glutamate binding site. The N-linked (GlcNAc...) asparagine glycan is linked to Asn88. L-glutamate is bound by residues Ser151 and Ser172–Thr174. N-linked (GlcNAc...) asparagine glycosylation occurs at Asn209. An L-glutamate-binding site is contributed by Tyr222. Disulfide bonds link Cys240–Cys529, Cys275–Cys277, Cys364–Cys380, Cys418–Cys425, Cys510–Cys530, Cys514–Cys533, Cys536–Cys548, and Cys551–Cys564. Asp304 provides a ligand contact to L-glutamate. 2 N-linked (GlcNAc...) asparagine glycosylation sites follow: Asn377 and Asn381. Lys395 serves as a coordination point for L-glutamate. The N-linked (GlcNAc...) asparagine glycan is linked to Asn444. Residues Ile580 to Ile602 traverse the membrane as a helical segment. Residues Tyr603–Ser612 lie on the Cytoplasmic side of the membrane. A helical transmembrane segment spans residues Ser613 to Ile635. Residues Ala636–Cys643 lie on the Extracellular side of the membrane. Residues Cys643 and Cys732 are joined by a disulfide bond. A helical membrane pass occupies residues Tyr644–Asn666. Topologically, residues Arg667–Gln692 are cytoplasmic. Residues Leu693–Met713 form a helical membrane-spanning segment. At Glu714–Asn736 the chain is on the extracellular side. N-linked (GlcNAc...) asparagine glycosylation is present at Asn733. Residues Leu737–Phe758 form a helical membrane-spanning segment. The Cytoplasmic segment spans residues Lys759–Lys771. Residues Tyr772–Ser794 form a helical membrane-spanning segment. Over Asn795–Lys797 the chain is Extracellular. Residues Ile798–Pro819 traverse the membrane as a helical segment. The Cytoplasmic segment spans residues Lys820–Leu1203. The residue at position 860 (Ser860) is a Phosphoserine. Arg868 carries the omega-N-methylarginine modification. Disordered stretches follow at residues Phe892 to Pro970, Glu1003 to Met1054, and Gly1122 to Ile1182. Over residues Thr905–Glu920 the composition is skewed to polar residues. Arg924 is modified (omega-N-methylarginine). Positions Pro1007 to Pro1017 are enriched in low complexity. Phosphoserine occurs at positions 1014 and 1016. Polar residues-rich tracts occupy residues His1039–Met1054 and Asp1165–Ser1176.

Belongs to the G-protein coupled receptor 3 family. Interacts with RYR1, RYR2, ITPR1, SHANK1 and SHANK3. The PPXXF motif binds HOMER1, HOMER2 and HOMER3. Interacts with SIAH1 and TAMALIN. Interacts with NCDN. Interacts with NECAB2. Interacts with CAMK2A. As to expression, widely distributed in neuronal cells of the central nervous system.

It is found in the cell membrane. G-protein coupled receptor for glutamate. Ligand binding causes a conformation change that triggers signaling via guanine nucleotide-binding proteins (G proteins) and modulates the activity of down-stream effectors. Signaling activates a phosphatidylinositol-calcium second messenger system and generates a calcium-activated chloride current. Plays an important role in the regulation of synaptic plasticity and the modulation of the neural network activity. This Rattus norvegicus (Rat) protein is Metabotropic glutamate receptor 5 (Grm5).